We begin with the raw amino-acid sequence, 395 residues long: Innexin inx3 (395 aa).

The Cytoplasmic segment spans residues 1–37 (MAVFGMVSAVSGFIKIRYLLDKAVIDNMVFRCHYRIT). Residues 38-58 (TAILFTCCIIVTANNLIGDPI) traverse the membrane as a helical segment. At 59 to 114 (SCINDGAIPMHVINTFCWITYTYTIPGQQHRQIGTDVAGPGLGNEYGQEKRYHSYY) the chain is on the extracellular side. The chain crosses the membrane as a helical span at residues 115–135 (QWVPFVLFFQGLMFYVPHWVW). Over 136 to 183 (KNMEDGKIRMITDGLRGMVSVPDDYRRDRQDRILKYFVNSLNTHNGYS) the chain is Cytoplasmic. Residues 184–204 (FAYFFCELLNFINVIVNIFMV) traverse the membrane as a helical segment. Residues 205–272 (DKFLGGAFMS…VLALNILNEK (68 aa)) lie on the Extracellular side of the membrane. Residues 273-293 (IYIFLWFWFIILATISGVAVL) traverse the membrane as a helical segment. At 294-395 (YSLVVIMMPT…TFGGGKETET (102 aa)) the chain is on the cytoplasmic side. Phosphoserine occurs at positions 366 and 377. A Phosphotyrosine modification is found at tyrosine 381.

Belongs to the pannexin family. Heterooligomer of Inx2 (via cytoplasmic C-terminal region) and Inx3 (via cytoplasmic C-terminal region). As to expression, in ovary, expressed in nurse cells and follicle cells. Expressed in embryonic epithelial cells. Ubiquitously expressed in stage 5 embryos. Expressed in foregut and hindgut from stage 11-17 and in proventriculus, epidermis and CNS in stage 16 embryos (at protein level). Expressed in anterior and ventral regions in stage 8 embryos. Repeating epidermal pattern emerges at stage 11, refines to one or two cells at each side of the segment borders by stage 13. Expressed in the imaginal wing disk. In pupae, expressed in the CNS and in secondary and tertiary pigment cells of the retina.

It is found in the cell membrane. It localises to the cell junction. Its subcellular location is the gap junction. The protein localises to the cytoplasm. The protein resides in the lateral cell membrane. It is found in the apicolateral cell membrane. Functionally, structural components of the gap junctions. Essential for proper epithelial development of the epidermis. The protein is Innexin inx3 (Inx3) of Drosophila melanogaster (Fruit fly).